A 545-amino-acid chain; its full sequence is CTP synthase (545 aa).

The amidoligase domain stretch occupies residues 1–266 (MTHFIFVTGG…DDLICERFGY (266 aa)). A CTP-binding site is contributed by serine 13. Serine 13 contributes to the UTP binding site. Residues 14 to 19 (SLGKGI) and aspartate 71 contribute to the ATP site. Aspartate 71 and glutamate 140 together coordinate Mg(2+). Residues 147 to 149 (DIE), 187 to 192 (KTKPTQ), and lysine 223 each bind CTP. UTP-binding positions include 187–192 (KTKPTQ) and lysine 223. 239 to 241 (KDA) contributes to the ATP binding site. The Glutamine amidotransferase type-1 domain maps to 292–543 (RVAMVGKYVE…IDAAKKQHLK (252 aa)). Glycine 353 provides a ligand contact to L-glutamine. Cysteine 380 functions as the Nucleophile; for glutamine hydrolysis in the catalytic mechanism. Residues 381–384 (LGMQ), glutamate 404, and arginine 471 each bind L-glutamine. Catalysis depends on residues histidine 516 and glutamate 518.

Belongs to the CTP synthase family. In terms of assembly, homotetramer.

The enzyme catalyses UTP + L-glutamine + ATP + H2O = CTP + L-glutamate + ADP + phosphate + 2 H(+). The catalysed reaction is L-glutamine + H2O = L-glutamate + NH4(+). It catalyses the reaction UTP + NH4(+) + ATP = CTP + ADP + phosphate + 2 H(+). Its pathway is pyrimidine metabolism; CTP biosynthesis via de novo pathway; CTP from UDP: step 2/2. With respect to regulation, allosterically activated by GTP, when glutamine is the substrate; GTP has no effect on the reaction when ammonia is the substrate. The allosteric effector GTP functions by stabilizing the protein conformation that binds the tetrahedral intermediate(s) formed during glutamine hydrolysis. Inhibited by the product CTP, via allosteric rather than competitive inhibition. In terms of biological role, catalyzes the ATP-dependent amination of UTP to CTP with either L-glutamine or ammonia as the source of nitrogen. Regulates intracellular CTP levels through interactions with the four ribonucleotide triphosphates. The protein is CTP synthase of Acinetobacter baylyi (strain ATCC 33305 / BD413 / ADP1).